The chain runs to 209 residues: Scoloptoxin SSD346 (209 aa).

Residues 1-22 (NILLSSTLFVLLMFQIIGSGLG) form the signal peptide.

In terms of processing, contains 2 disulfide bonds. In terms of tissue distribution, expressed by the venom gland.

The protein resides in the secreted. Functionally, may act as a voltage-gated calcium channel inhibitor. This Scolopendra dehaani (Thai centipede) protein is Scoloptoxin SSD346.